A 143-amino-acid chain; its full sequence is Transcriptional regulator MraZ (143 aa).

SpoVT-AbrB domains lie at 5-47 (EYEH…PMPV) and 76-119 (ASDL…SAER).

Belongs to the MraZ family. As to quaternary structure, forms oligomers.

Its subcellular location is the cytoplasm. The protein resides in the nucleoid. In Herpetosiphon aurantiacus (strain ATCC 23779 / DSM 785 / 114-95), this protein is Transcriptional regulator MraZ.